The chain runs to 238 residues: Peptidyl-tRNA hydrolase (238 aa).

A tRNA-binding site is contributed by Y14. H19 functions as the Proton acceptor in the catalytic mechanism. Residues F64, N66, and N112 each coordinate tRNA. Basic and acidic residues predominate over residues 190 to 202; it reads KTEEPAPKPEKKT. The segment at 190-225 is disordered; the sequence is KTEEPAPKPEKKTVAKSHIHQARNHNQPRMPESGPM. The span at 203–212 shows a compositional bias: basic residues; sequence VAKSHIHQAR.

The protein belongs to the PTH family. As to quaternary structure, monomer.

The protein localises to the cytoplasm. It catalyses the reaction an N-acyl-L-alpha-aminoacyl-tRNA + H2O = an N-acyl-L-amino acid + a tRNA + H(+). Hydrolyzes ribosome-free peptidyl-tRNAs (with 1 or more amino acids incorporated), which drop off the ribosome during protein synthesis, or as a result of ribosome stalling. Functionally, catalyzes the release of premature peptidyl moieties from peptidyl-tRNA molecules trapped in stalled 50S ribosomal subunits, and thus maintains levels of free tRNAs and 50S ribosomes. In Rhizobium rhizogenes (strain K84 / ATCC BAA-868) (Agrobacterium radiobacter), this protein is Peptidyl-tRNA hydrolase.